Here is a 429-residue protein sequence, read N- to C-terminus: Gamma-glutamyl phosphate reductase (429 aa).

This sequence belongs to the gamma-glutamyl phosphate reductase family.

Its subcellular location is the cytoplasm. It carries out the reaction L-glutamate 5-semialdehyde + phosphate + NADP(+) = L-glutamyl 5-phosphate + NADPH + H(+). It functions in the pathway amino-acid biosynthesis; L-proline biosynthesis; L-glutamate 5-semialdehyde from L-glutamate: step 2/2. Catalyzes the NADPH-dependent reduction of L-glutamate 5-phosphate into L-glutamate 5-semialdehyde and phosphate. The product spontaneously undergoes cyclization to form 1-pyrroline-5-carboxylate. The polypeptide is Gamma-glutamyl phosphate reductase (Bradyrhizobium sp. (strain BTAi1 / ATCC BAA-1182)).